A 517-amino-acid polypeptide reads, in one-letter code: tRNA-2-methylthio-N(6)-dimethylallyladenosine synthase (517 aa).

Residues 29-146 (RTYQVRTYGC…LPTLLERARH (118 aa)) enclose the MTTase N-terminal domain. Cysteine 38, cysteine 75, cysteine 109, cysteine 183, cysteine 187, and cysteine 190 together coordinate [4Fe-4S] cluster. The Radical SAM core domain maps to 169 to 405 (RESAYAAWVS…VELQESISLQ (237 aa)). The region spanning 408 to 475 (QALVGQTVEL…PHHLIADAGV (68 aa)) is the TRAM domain.

It belongs to the methylthiotransferase family. MiaB subfamily. Monomer. It depends on [4Fe-4S] cluster as a cofactor.

The protein localises to the cytoplasm. It carries out the reaction N(6)-dimethylallyladenosine(37) in tRNA + (sulfur carrier)-SH + AH2 + 2 S-adenosyl-L-methionine = 2-methylsulfanyl-N(6)-dimethylallyladenosine(37) in tRNA + (sulfur carrier)-H + 5'-deoxyadenosine + L-methionine + A + S-adenosyl-L-homocysteine + 2 H(+). Its function is as follows. Catalyzes the methylthiolation of N6-(dimethylallyl)adenosine (i(6)A), leading to the formation of 2-methylthio-N6-(dimethylallyl)adenosine (ms(2)i(6)A) at position 37 in tRNAs that read codons beginning with uridine. This chain is tRNA-2-methylthio-N(6)-dimethylallyladenosine synthase, found in Mycolicibacterium paratuberculosis (strain ATCC BAA-968 / K-10) (Mycobacterium paratuberculosis).